Here is a 184-residue protein sequence, read N- to C-terminus: Potassium-transporting ATPase KdpC subunit (184 aa).

Residues 6–26 traverse the membrane as a helical segment; it reads TAVLYTIISAVFLGLGYPLIM.

The protein belongs to the KdpC family. As to quaternary structure, the system is composed of three essential subunits: KdpA, KdpB and KdpC.

The protein localises to the cell inner membrane. In terms of biological role, part of the high-affinity ATP-driven potassium transport (or Kdp) system, which catalyzes the hydrolysis of ATP coupled with the electrogenic transport of potassium into the cytoplasm. This subunit acts as a catalytic chaperone that increases the ATP-binding affinity of the ATP-hydrolyzing subunit KdpB by the formation of a transient KdpB/KdpC/ATP ternary complex. The chain is Potassium-transporting ATPase KdpC subunit from Acidobacterium capsulatum (strain ATCC 51196 / DSM 11244 / BCRC 80197 / JCM 7670 / NBRC 15755 / NCIMB 13165 / 161).